The following is a 307-amino-acid chain: Exosome complex component RRP45A (307 aa).

This sequence belongs to the RNase PH family. In terms of tissue distribution, expressed in roots, leaves, stems, buds and siliques.

The protein localises to the cytoplasm. Its subcellular location is the nucleus. Probable 3'-&gt;5' exoribonuclease involved in the regulation of cuticular wax biosynthesis. Can perform exosomal functions and partially complement the yeast rrp45 null mutant. This chain is Exosome complex component RRP45A, found in Arabidopsis thaliana (Mouse-ear cress).